The sequence spans 245 residues: MMKLKVYADRMSQPSRAVIIFCKVNGIQFDEVLISLAKRQQLSPEFKDINPLGKVPAIVDGRLKLFESHAILIYLSSAFPSVADHWYPNDLSKRAKIHSVLDWHHTNLRRGAAGYVLNSVLGPALGLPLNPKAAAEAEQLLTKSLSTLETFWLKGNAKFLLGSNQPSIADLSLVCELMQLQVLDDKDRLRLLSTHKKVEQWIENTKKATMPHFDETHEILFKVKEGFQKRREMGTLSKPGLQSKI.

Positions 2–83 constitute a GST N-terminal domain; the sequence is MKLKVYADRM…YLSSAFPSVA (82 aa). Glutathione contacts are provided by residues 12 to 13, 41 to 42, 54 to 55, and 67 to 68; these read SQ, QL, KV, and ES. The GST C-terminal domain occupies 90–233; the sequence is DLSKRAKIHS…KEGFQKRREM (144 aa). The Microbody targeting signal motif lies at 243–245; the sequence is SKI.

Belongs to the GST superfamily. Theta family.

The protein resides in the nucleus. The protein localises to the peroxisome. It catalyses the reaction RX + glutathione = an S-substituted glutathione + a halide anion + H(+). In vitro, possesses glutathione S-transferase activity toward 1-chloro-2,4-dinitrobenzene (CDNB) and p-nitrobenzyl chloride (pNBC), and glutathione peroxidase activity toward cumene hydroperoxide and linoleic acid-13-hydroperoxide. May be involved in the conjugation of reduced glutathione to a wide number of exogenous and endogenous hydrophobic electrophiles and have a detoxification role against certain herbicides. The polypeptide is Glutathione S-transferase T1 (GSTT1) (Arabidopsis thaliana (Mouse-ear cress)).